Reading from the N-terminus, the 433-residue chain is MAQFYSAKRRTTTRQIITVSVNDLDSFGQGVARHNGKTLFIPGLLPQENAEVTVTEDKKQYARAKVVRRLSDSPERETPRCPHFGVCGGCQQQHASVDLQQRSKSAALARLMKHEVSEVIADVPWGYRRRARLSLNYLPKTQQLQMGFRKAGSSDIVDVKQCPILVPQLEALLPKVRACLGSLQAMRHLGHVELVQATSGTLMILRHTAPLSSADREKLERFSHSEGLDLYLAPDSEILETVSGEMPWYDSNGLRLTFSPRDFIQVNAGVNQKMVASALEWLDVQPEDRVLDLFCGMGNFTLPLATQAASVVGVEGVPALVEKGQQNARLNGLQNVTFYHENLEEDVTKQPWAKNGFDKVLLDPARAGAAGVMQQIIKLEPIRIVYVSCNPATLARDSEALLKAGYTIARLAMLDMFPHTGHLESMVLFSRVK.

The TRAM domain maps to 10 to 68 (RTTTRQIITVSVNDLDSFGQGVARHNGKTLFIPGLLPQENAEVTVTEDKKQYARAKVVR). [4Fe-4S] cluster contacts are provided by cysteine 81, cysteine 87, cysteine 90, and cysteine 162. Positions 265, 294, 299, 315, 342, and 363 each coordinate S-adenosyl-L-methionine. The active-site Nucleophile is cysteine 389.

The protein belongs to the class I-like SAM-binding methyltransferase superfamily. RNA M5U methyltransferase family. RlmD subfamily.

It catalyses the reaction uridine(1939) in 23S rRNA + S-adenosyl-L-methionine = 5-methyluridine(1939) in 23S rRNA + S-adenosyl-L-homocysteine + H(+). Functionally, catalyzes the formation of 5-methyl-uridine at position 1939 (m5U1939) in 23S rRNA. The polypeptide is 23S rRNA (uracil(1939)-C(5))-methyltransferase RlmD (Shigella boydii serotype 4 (strain Sb227)).